Here is a 118-residue protein sequence, read N- to C-terminus: Myotrophin (118 aa).

Cys-2 is subject to N-acetylcysteine. The stretch at 2–30 is one ANK 1 repeat; sequence CDKEFMWALKNGDLDEVKDYVAKGEDVNR. Residues Lys-4, Lys-11, and Lys-24 each carry the N6-acetyllysine modification. Thr-31 carries the post-translational modification Phosphothreonine. 2 ANK repeats span residues 34-66 and 67-99; these read GGRKPLHYAADCGQLEILEFLLLKGADINAPDK and HHITPLLSAVYEGHVSCVKLLLSKGADKTVKGP.

It belongs to the myotrophin family. Interacts with the heterodimer formed by CAPZA1 and CAPZB. Interacts with RELA.

The protein resides in the cytoplasm. Its subcellular location is the nucleus. It is found in the perinuclear region. Its function is as follows. Plays a role in the regulation of the growth of actin filaments. Inhibits the activity of the F-actin-capping protein complex formed by the CAPZA1 and CAPZB heterodimer. Promotes dimerization of NF-kappa-B subunits and regulates NF-kappa-B transcription factor activity. Promotes growth of cardiomyocytes, but not cardiomyocyte proliferation. Promotes cardiac muscle hypertrophy. In Rattus norvegicus (Rat), this protein is Myotrophin (Mtpn).